Here is a 222-residue protein sequence, read N- to C-terminus: Cytochrome b6 (222 aa).

A helical membrane pass occupies residues 39–59 (IFYCLGGITLVCFLIQFATGF). Cys-42 lines the heme c pocket. Heme b contacts are provided by His-93 and His-107. Transmembrane regions (helical) follow at residues 97-117 (ASMMVLMMILHTFRVYLTGGF), 123-143 (LTWVTGVVMAVITVSFGVTGY), and 193-213 (LHTFVLPWFIAVFMLLHFLMI). Heme b is bound by residues His-194 and His-209.

It belongs to the cytochrome b family. PetB subfamily. In terms of assembly, the 4 large subunits of the cytochrome b6-f complex are cytochrome b6, subunit IV (17 kDa polypeptide, PetD), cytochrome f and the Rieske protein, while the 4 small subunits are PetG, PetL, PetM and PetN. The complex functions as a dimer. The cofactor is heme b. Heme c is required as a cofactor.

Its subcellular location is the cellular thylakoid membrane. Component of the cytochrome b6-f complex, which mediates electron transfer between photosystem II (PSII) and photosystem I (PSI), cyclic electron flow around PSI, and state transitions. In Trichodesmium erythraeum (strain IMS101), this protein is Cytochrome b6.